An 89-amino-acid polypeptide reads, in one-letter code: Small ribosomal subunit protein uS15 (89 aa).

Residues 1–23 (MSLGTEEKQNLINTHQVHPTDTG) are disordered. The span at 10-23 (NLINTHQVHPTDTG) shows a compositional bias: polar residues.

Belongs to the universal ribosomal protein uS15 family. In terms of assembly, part of the 30S ribosomal subunit. Forms a bridge to the 50S subunit in the 70S ribosome, contacting the 23S rRNA.

Its function is as follows. One of the primary rRNA binding proteins, it binds directly to 16S rRNA where it helps nucleate assembly of the platform of the 30S subunit by binding and bridging several RNA helices of the 16S rRNA. Forms an intersubunit bridge (bridge B4) with the 23S rRNA of the 50S subunit in the ribosome. In Prochlorococcus marinus (strain NATL2A), this protein is Small ribosomal subunit protein uS15.